Reading from the N-terminus, the 194-residue chain is Phosphoheptose isomerase (194 aa).

The region spanning 37-194 is the SIS domain; that stretch reads ISNSFKQGGK…LIEFEMAKQA (158 aa). 52-54 is a binding site for substrate; that stretch reads NGG. Positions 61 and 65 each coordinate Zn(2+). Residues Glu65, 93–94, 119–121, Ser124, and Gln172 contribute to the substrate site; these read ND and STS. 2 residues coordinate Zn(2+): Gln172 and His180.

Belongs to the SIS family. GmhA subfamily. In terms of assembly, homotetramer. Zn(2+) is required as a cofactor.

The protein localises to the cytoplasm. The enzyme catalyses 2 D-sedoheptulose 7-phosphate = D-glycero-alpha-D-manno-heptose 7-phosphate + D-glycero-beta-D-manno-heptose 7-phosphate. Its pathway is carbohydrate biosynthesis; D-glycero-D-manno-heptose 7-phosphate biosynthesis; D-glycero-alpha-D-manno-heptose 7-phosphate and D-glycero-beta-D-manno-heptose 7-phosphate from sedoheptulose 7-phosphate: step 1/1. Its function is as follows. Catalyzes the isomerization of sedoheptulose 7-phosphate in D-glycero-D-manno-heptose 7-phosphate. The chain is Phosphoheptose isomerase from Haemophilus influenzae (strain PittEE).